The following is a 359-amino-acid chain: ATP-dependent kinase YFH7 (359 aa).

31 to 39 contributes to the ATP binding site; the sequence is GPPGSGKST.

Belongs to the YFH7 family.

ATP-dependent kinase that could be involved in endoplasmic reticulum membrane assembly. This is ATP-dependent kinase YFH7 (YFH7) from Vanderwaltozyma polyspora (strain ATCC 22028 / DSM 70294 / BCRC 21397 / CBS 2163 / NBRC 10782 / NRRL Y-8283 / UCD 57-17) (Kluyveromyces polysporus).